The following is a 250-amino-acid chain: UPF0758 protein RPB_0700 (250 aa).

Residues 1 to 27 form a disordered region; sequence MVDPISNAAPPMPADSSERLDPPGFAE. The region spanning 128–250 is the MPN domain; the sequence is VLSSWSAVID…HASLKGLKLF (123 aa). The Zn(2+) site is built by H199, H201, and D212. The short motif at 199–212 is the JAMM motif element; that stretch reads HNHPSGDPTPSQAD.

This sequence belongs to the UPF0758 family.

The chain is UPF0758 protein RPB_0700 from Rhodopseudomonas palustris (strain HaA2).